Here is a 130-residue protein sequence, read N- to C-terminus: Protein Wnt-9 (130 aa).

The O-palmitoleoyl serine; by PORCN moiety is linked to residue Ser-1. The disordered stretch occupies residues 41 to 69 (AGERTIARSRRRPREQRGQRRPKVSDGAL). Basic residues predominate over residues 47-62 (ARSRRRPREQRGQRRP). Residue Asn-97 is glycosylated (N-linked (GlcNAc...) asparagine). Cys-100 and Cys-111 are oxidised to a cystine.

It belongs to the Wnt family. Palmitoleoylation is required for efficient binding to frizzled receptors. Depalmitoleoylation leads to Wnt signaling pathway inhibition.

It is found in the secreted. Its subcellular location is the extracellular space. The protein resides in the extracellular matrix. Functionally, ligand for members of the frizzled family of seven transmembrane receptors. Probable developmental protein. May be a signaling molecule which affects the development of discrete regions of tissues. Is likely to signal over only few cell diameters. This Eptatretus stoutii (Pacific hagfish) protein is Protein Wnt-9 (WNT-9).